The following is a 156-amino-acid chain: ATP synthase subunit b (156 aa).

The chain crosses the membrane as a helical span at residues 12–32 (VAFLIFVLFCMKYVWPPVITA).

The protein belongs to the ATPase B chain family. F-type ATPases have 2 components, F(1) - the catalytic core - and F(0) - the membrane proton channel. F(1) has five subunits: alpha(3), beta(3), gamma(1), delta(1), epsilon(1). F(0) has three main subunits: a(1), b(2) and c(10-14). The alpha and beta chains form an alternating ring which encloses part of the gamma chain. F(1) is attached to F(0) by a central stalk formed by the gamma and epsilon chains, while a peripheral stalk is formed by the delta and b chains.

It is found in the cell inner membrane. Functionally, f(1)F(0) ATP synthase produces ATP from ADP in the presence of a proton or sodium gradient. F-type ATPases consist of two structural domains, F(1) containing the extramembraneous catalytic core and F(0) containing the membrane proton channel, linked together by a central stalk and a peripheral stalk. During catalysis, ATP synthesis in the catalytic domain of F(1) is coupled via a rotary mechanism of the central stalk subunits to proton translocation. Its function is as follows. Component of the F(0) channel, it forms part of the peripheral stalk, linking F(1) to F(0). In Pseudomonas putida (strain GB-1), this protein is ATP synthase subunit b.